The primary structure comprises 267 residues: Small ribosomal subunit protein uS2 (267 aa).

Residues 232–267 form a disordered region; it reads ATVREEEFADAPAEDAKPARRAPAKKAAADKGEAQA. Positions 258 to 267 are enriched in basic and acidic residues; sequence AAADKGEAQA.

Belongs to the universal ribosomal protein uS2 family.

This Stenotrophomonas maltophilia (strain R551-3) protein is Small ribosomal subunit protein uS2.